The primary structure comprises 419 residues: Phospholipase A1-IIgamma (419 aa).

Coiled-coil stretches lie at residues 1 to 21 (MKRK…EFAK) and 207 to 227 (NARD…KDEE). S236 functions as the Acyl-ester intermediate in the catalytic mechanism. Catalysis depends on charge relay system residues S236, D302, and H339.

The protein belongs to the AB hydrolase superfamily. Lipase family. In terms of tissue distribution, expressed in seedlings, stems and siliques, and, to a lower extent, in flowers.

It localises to the cytoplasm. Acylhydrolase that catalyzes the hydrolysis of 1,3-diacylglycerol (1,3-DAG) and 1-monoacylglycerol (1-MAG) at the sn-1 position. High activity toward 1,3-DAG and 1-MAG, but low activity toward 1,2-diacylglycerol (1,2-DAG) and 1-lysophosphatidylcholine (1-LPC), and no activity toward phosphatidylcholine (PC), monogalactosyldiacylglycerol (MGDG), digalactosyldiacylglycerol (DGDG), triacylglycerol (TAG) and 2-monoacylglycerol (2-MAG). May be involved in the negative regulation of seedling establishment by inhibiting the breakdown, beta-oxidation and mobilization of seed storage oils. In Arabidopsis thaliana (Mouse-ear cress), this protein is Phospholipase A1-IIgamma (DSEL).